The chain runs to 155 residues: Phosphoprotein pp24 (155 aa).

Residues 1–50 (MEFEAEHEGLTASWVAPAPQGGKGAEGRAGVADEAGHGKTEAECAEDGEK) are disordered. Over residues 34 to 50 (EAGHGKTEAECAEDGEK) the composition is skewed to basic and acidic residues. A coiled-coil region spans residues 76–107 (RKRIEAKYMDLLVEAERENKNLRKKYNIILDV).

This is Phosphoprotein pp24 (MDV008) from Gallus gallus (Chicken).